Consider the following 253-residue polypeptide: Anamorsin homolog (253 aa).

The N-terminal SAM-like domain stretch occupies residues 4–129 (FKGLQKSLYI…ETGSSARLSF (126 aa)). Positions 130 to 161 (AKKNSSTLNVWKISGDDDELIDEEDLLDEVDK) are linker. Cys-172, Cys-181, Cys-184, and Cys-186 together coordinate [2Fe-2S] cluster. Residues 172–186 (CSTTGKRKACKNCSC) form a fe-S binding site A region. 4 residues coordinate [4Fe-4S] cluster: Cys-214, Cys-217, Cys-225, and Cys-228. 2 short sequence motifs (cx2C motif) span residues 214–217 (CGNC) and 225–228 (CSSC). Residues 214–228 (CGNCYLGDAFRCSSC) are fe-S binding site B.

Belongs to the anamorsin family. Monomer. It depends on [2Fe-2S] cluster as a cofactor. [4Fe-4S] cluster serves as cofactor.

Its subcellular location is the cytoplasm. The protein resides in the mitochondrion intermembrane space. Component of the cytosolic iron-sulfur (Fe-S) protein assembly (CIA) machinery. Required for the maturation of extramitochondrial Fe-S proteins. Part of an electron transfer chain functioning in an early step of cytosolic Fe-S biogenesis, facilitating the de novo assembly of a [4Fe-4S] cluster on the cytosolic Fe-S scaffold complex. Electrons are transferred from NADPH via a FAD- and FMN-containing diflavin oxidoreductase. Together with the diflavin oxidoreductase, also required for the assembly of the diferric tyrosyl radical cofactor of ribonucleotide reductase (RNR), probably by providing electrons for reduction during radical cofactor maturation in the catalytic small subunit. The protein is Anamorsin homolog of Drosophila willistoni (Fruit fly).